We begin with the raw amino-acid sequence, 408 residues long: Elongation factor Tu, chloroplastic (408 aa).

The tr-type G domain occupies 10–213 (KPHVNIGTIG…KVDEYIPTPE (204 aa)). The G1 stretch occupies residues 19-26 (GHVDHGKT). A GTP-binding site is contributed by 19–26 (GHVDHGKT). Position 26 (Thr-26) interacts with Mg(2+). The segment at 59-63 (GITIN) is G2. Residues 80–83 (DCPG) are G3. GTP-binding positions include 80 to 84 (DCPGH) and 135 to 138 (NKAD). A G4 region spans residues 135-138 (NKAD). Residues 173 to 175 (SAL) form a G5 region.

It belongs to the TRAFAC class translation factor GTPase superfamily. Classic translation factor GTPase family. EF-Tu/EF-1A subfamily.

The protein localises to the plastid. Its subcellular location is the chloroplast. It carries out the reaction GTP + H2O = GDP + phosphate + H(+). GTP hydrolase that promotes the GTP-dependent binding of aminoacyl-tRNA to the A-site of ribosomes during protein biosynthesis. In Guillardia theta (Cryptophyte), this protein is Elongation factor Tu, chloroplastic (tufA).